The following is a 37-amino-acid chain: Large ribosomal subunit protein bL36c (37 aa).

This sequence belongs to the bacterial ribosomal protein bL36 family.

The protein localises to the plastid. It localises to the chloroplast. The protein is Large ribosomal subunit protein bL36c of Populus alba (White poplar).